Here is a 142-residue protein sequence, read N- to C-terminus: Large ribosomal subunit protein uL11 (142 aa).

The protein belongs to the universal ribosomal protein uL11 family. As to quaternary structure, part of the ribosomal stalk of the 50S ribosomal subunit. Interacts with L10 and the large rRNA to form the base of the stalk. L10 forms an elongated spine to which L12 dimers bind in a sequential fashion forming a multimeric L10(L12)X complex. One or more lysine residues are methylated.

Functionally, forms part of the ribosomal stalk which helps the ribosome interact with GTP-bound translation factors. This is Large ribosomal subunit protein uL11 from Proteus vulgaris.